The sequence spans 703 residues: Glycine--tRNA ligase beta subunit (703 aa).

Belongs to the class-II aminoacyl-tRNA synthetase family. In terms of assembly, tetramer of two alpha and two beta subunits.

Its subcellular location is the cytoplasm. It carries out the reaction tRNA(Gly) + glycine + ATP = glycyl-tRNA(Gly) + AMP + diphosphate. The protein is Glycine--tRNA ligase beta subunit of Myxococcus xanthus (strain DK1622).